A 39-amino-acid polypeptide reads, in one-letter code: Photosystem II reaction center protein L (39 aa).

The chain crosses the membrane as a helical span at residues 18-38 (SLYLGLLIVFTTGILFSSYFF).

Belongs to the PsbL family. PSII is composed of 1 copy each of membrane proteins PsbA, PsbB, PsbC, PsbD, PsbE, PsbF, PsbH, PsbI, PsbJ, PsbK, PsbL, PsbM, PsbT, PsbX, PsbY, PsbZ, Psb30/Ycf12, peripheral proteins PsbO, CyanoQ (PsbQ), PsbU, PsbV and a large number of cofactors. It forms dimeric complexes.

The protein localises to the cellular thylakoid membrane. One of the components of the core complex of photosystem II (PSII). PSII is a light-driven water:plastoquinone oxidoreductase that uses light energy to abstract electrons from H(2)O, generating O(2) and a proton gradient subsequently used for ATP formation. It consists of a core antenna complex that captures photons, and an electron transfer chain that converts photonic excitation into a charge separation. This subunit is found at the monomer-monomer interface and is required for correct PSII assembly and/or dimerization. The chain is Photosystem II reaction center protein L from Synechococcus sp. (strain CC9311).